The chain runs to 576 residues: RING finger and SPRY domain-containing protein 1 (576 aa).

Residues 1 to 16 (MIVFGWAVFLASRSLG) form the signal peptide. Ser-50 carries the phosphoserine modification. The disordered stretch occupies residues 50–99 (SGTDDSVDTQQQQAENSAVPTADTRSQPRDPVRPPRRGRGPHEPRRKKQN). The segment covering 57 to 68 (DTQQQQAENSAV) has biased composition (polar residues). Residues 83–97 (PPRRGRGPHEPRRKK) are compositionally biased toward basic residues. The 184-residue stretch at 300–483 (LFLKEGRQLT…CEFNFGAKPF (184 aa)) folds into the B30.2/SPRY domain. Asn-314 is a glycosylation site (N-linked (GlcNAc...) asparagine). An RING-type zinc finger spans residues 527 to 562 (CSLCCDEVADTQLKPCGHSDLCMDCALQLETCPLCR).

The protein localises to the secreted. This chain is RING finger and SPRY domain-containing protein 1 (RSPRY1), found in Homo sapiens (Human).